We begin with the raw amino-acid sequence, 130 residues long: Methylglyoxal synthase (130 aa).

Residues 1–130 (MSKPRIALIA…DLARNMQDVC (130 aa)) enclose the MGS-like domain. Substrate-binding positions include His-11, Lys-15, 37–40 (TGTT), and 57–58 (SG). Catalysis depends on Asp-63, which acts as the Proton donor/acceptor. His-90 provides a ligand contact to substrate.

It belongs to the methylglyoxal synthase family.

The enzyme catalyses dihydroxyacetone phosphate = methylglyoxal + phosphate. Catalyzes the formation of methylglyoxal from dihydroxyacetone phosphate. This chain is Methylglyoxal synthase, found in Burkholderia vietnamiensis (strain G4 / LMG 22486) (Burkholderia cepacia (strain R1808)).